Consider the following 147-residue polypeptide: NAD(P)H-quinone oxidoreductase subunit N (147 aa).

It belongs to the complex I NdhN subunit family. In terms of assembly, NDH-1 can be composed of about 15 different subunits; different subcomplexes with different compositions have been identified which probably have different functions.

It is found in the cellular thylakoid membrane. The catalysed reaction is a plastoquinone + NADH + (n+1) H(+)(in) = a plastoquinol + NAD(+) + n H(+)(out). It catalyses the reaction a plastoquinone + NADPH + (n+1) H(+)(in) = a plastoquinol + NADP(+) + n H(+)(out). Its function is as follows. NDH-1 shuttles electrons from an unknown electron donor, via FMN and iron-sulfur (Fe-S) centers, to quinones in the respiratory and/or the photosynthetic chain. The immediate electron acceptor for the enzyme in this species is believed to be plastoquinone. Couples the redox reaction to proton translocation, and thus conserves the redox energy in a proton gradient. Cyanobacterial NDH-1 also plays a role in inorganic carbon-concentration. The chain is NAD(P)H-quinone oxidoreductase subunit N from Synechococcus sp. (strain JA-3-3Ab) (Cyanobacteria bacterium Yellowstone A-Prime).